The chain runs to 174 residues: Large ribosomal subunit protein uL22 (174 aa).

Belongs to the universal ribosomal protein uL22 family. In terms of assembly, part of the 50S ribosomal subunit.

In terms of biological role, this protein binds specifically to 23S rRNA. It makes multiple contacts with different domains of the 23S rRNA in the assembled 50S subunit and ribosome. The globular domain of the protein is located near the polypeptide exit tunnel on the outside of the subunit, while an extended beta-hairpin is found that lines the wall of the exit tunnel in the center of the 70S ribosome. The sequence is that of Large ribosomal subunit protein uL22 from Nanoarchaeum equitans (strain Kin4-M).